The primary structure comprises 91 residues: UPF0358 protein SAS1047 (91 aa).

Belongs to the UPF0358 family.

The protein is UPF0358 protein SAS1047 of Staphylococcus aureus (strain MSSA476).